Consider the following 379-residue polypeptide: Ribosomal RNA large subunit methyltransferase G (379 aa).

Belongs to the methyltransferase superfamily. RlmG family.

The protein resides in the cytoplasm. It catalyses the reaction guanosine(1835) in 23S rRNA + S-adenosyl-L-methionine = N(2)-methylguanosine(1835) in 23S rRNA + S-adenosyl-L-homocysteine + H(+). In terms of biological role, specifically methylates the guanine in position 1835 (m2G1835) of 23S rRNA. This chain is Ribosomal RNA large subunit methyltransferase G, found in Pectobacterium atrosepticum (strain SCRI 1043 / ATCC BAA-672) (Erwinia carotovora subsp. atroseptica).